The chain runs to 276 residues: Putative aliphatic sulfonates transport permease protein SsuC (276 aa).

The next 7 membrane-spanning stretches (helical) occupy residues Gly32–Val52, Ala54–Gly74, Ala87–Phe107, Leu119–Asp141, Ile146–Val168, Ile199–Leu219, and Val242–Leu262. One can recognise an ABC transmembrane type-1 domain in the interval Leu80–Val260.

It belongs to the binding-protein-dependent transport system permease family. CysTW subfamily.

The protein resides in the cell membrane. Its function is as follows. Part of a binding-protein-dependent transport system for aliphatic sulfonates. Probably responsible for the translocation of the substrate across the membrane. In Bacillus subtilis (strain 168), this protein is Putative aliphatic sulfonates transport permease protein SsuC (ssuC).